The primary structure comprises 859 residues: Pre-mRNA-splicing factor SYF1 (859 aa).

HAT repeat units follow at residues 17-49 (NIRN…YWKE), 52-84 (RTDK…WEST), 88-108 (VETS…VRDC), 123-157 (YDLA…FVEE), 177-219 (DEAE…ERYL), 238-271 (RDNI…FELN), 427-459 (VYSE…LYWR), 461-482 (NAIS…PYIE), 520-554 (ILLE…YLEA), 599-633 (YEVM…VATS), 639-675 (LSPE…FEER), 685-718 (EILR…KAES), 720-754 (LGPS…FESS), and 756-790 (GETI…FELK).

The protein belongs to the crooked-neck family. Belongs to the NTC complex (or PRP19-associated complex), composed of at least CEF1, CLF1, ISY1, NTC20, SNT309, SYF1, SYF2, and PRP19. The NTC complex associates with the spliceosome after the release of the U1 and U4 snRNAs and forms the CWC spliceosome subcomplex (or CEF1-associated complex) reminiscent of a late-stage spliceosome composed also of the U2, U5 and U6 snRNAs and at least BUD13, BUD31, BRR2, CDC40, CUS1, CWC2, CWC15, CWC21, CWC22, CWC23, CWC24, CWC25, CWC27, ECM2, HSH155, IST3, LEA1, MSL1, PRP8, PRP9, PRP11, PRP21, PRP22, PRP45, PRP46, SLU7, SMB1, SMD1, SMD2, SMD3, SMX2, SMX3, SNU114, SPP2, RSE1 and YJU2. Interacts with CEF1, CLF1, ISY1, NTC20, PRP22, PRP46 and SYF2.

It localises to the nucleus. In terms of biological role, involved in pre-mRNA splicing and cell cycle control. As a component of the NTC complex (or PRP19-associated complex), associates to the spliceosome to mediate conformational rearrangement or to stabilize the structure of the spliceosome after U4 snRNA dissociation, which leads to spliceosome maturation. The chain is Pre-mRNA-splicing factor SYF1 (SYF1) from Saccharomyces cerevisiae (strain ATCC 204508 / S288c) (Baker's yeast).